The following is a 327-amino-acid chain: Spermidine/putrescine import ATP-binding protein PotA (327 aa).

Positions 5 to 235 (IKVEAVEKHF…PKTLFVATFI (231 aa)) constitute an ABC transporter domain. 37-44 (GPSGCGKT) is a binding site for ATP.

The protein belongs to the ABC transporter superfamily. Spermidine/putrescine importer (TC 3.A.1.11.1) family. As to quaternary structure, the complex is composed of two ATP-binding proteins (PotA), two transmembrane proteins (PotB and PotC) and a solute-binding protein (PotD).

Its subcellular location is the cell membrane. It carries out the reaction ATP + H2O + polyamine-[polyamine-binding protein]Side 1 = ADP + phosphate + polyamineSide 2 + [polyamine-binding protein]Side 1.. Its function is as follows. Part of the ABC transporter complex PotABCD involved in spermidine/putrescine import. Responsible for energy coupling to the transport system. The protein is Spermidine/putrescine import ATP-binding protein PotA of Bacillus anthracis.